The following is a 241-amino-acid chain: B-cell receptor-associated protein 29 (241 aa).

The Lumenal portion of the chain corresponds to 1–6 (MTLQWA). The chain crosses the membrane as a helical span at residues 7–27 (AVATFLYAEIGLILIFCLPFI). At 28 to 43 (PPQRWQKIFSFNVWGK) the chain is on the cytoplasmic side. A helical transmembrane segment spans residues 44-64 (IATFWNKAFLTIIILLIVLFL). The Lumenal portion of the chain corresponds to 65 to 103 (DAVREVRKYSSVHTIEKSSTSRPDAYEHTQMKLFRSQRN). Residues 104–124 (LYISGFSLFFWLVLRRLVTLI) traverse the membrane as a helical segment. Over 125–241 (TQLAKELSNK…RLERGNKKRL (117 aa)) the chain is Cytoplasmic. The stretch at 166-233 (GKDEECVLEA…KEHSELQDRL (68 aa)) forms a coiled coil. The interval 198–223 (LSKAQNDVMEMKMQSERLSKEYDQLL) is disordered. Residues 206 to 223 (MEMKMQSERLSKEYDQLL) show a composition bias toward basic and acidic residues. The short motif at 238-241 (KKRL) is the Di-lysine motif element.

It belongs to the BCAP29/BCAP31 family. As to quaternary structure, homodimer. Heterodimer with BCAP31. Binds CASP8 (isoform 9) as a complex containing BCAP31, BCAP29, BCL2 and/or BCL2L1. Interacts with VAMP3, VAMP1 and membrane IgD immunoglobulins. May interact with ACTG1 and non-muscle myosin II.

It is found in the endoplasmic reticulum membrane. Its function is as follows. May play a role in anterograde transport of membrane proteins from the endoplasmic reticulum to the Golgi. May be involved in CASP8-mediated apoptosis. The polypeptide is B-cell receptor-associated protein 29 (BCAP29) (Homo sapiens (Human)).